Here is a 343-residue protein sequence, read N- to C-terminus: Cilia- and flagella-associated protein 36 (343 aa).

Ser85 and Ser147 each carry phosphoserine. Residues Ser147–Ser181 adopt a coiled-coil conformation. Positions Lys165–Tyr191 are disordered. The residue at position 201 (Ser201) is a Phosphoserine. The tract at residues Ser286–Lys323 is disordered. The segment covering Gln301–Lys323 has biased composition (basic and acidic residues).

The protein belongs to the CFAP36 family. In terms of assembly, interacts with ARL3. Widely expressed (at protein level).

It is found in the nucleus. It localises to the cytoplasm. The protein resides in the cell projection. Its subcellular location is the cilium. The protein localises to the flagellum. Functionally, may act as an effector for ARL3. This chain is Cilia- and flagella-associated protein 36, found in Rattus norvegicus (Rat).